Here is a 143-residue protein sequence, read N- to C-terminus: NADH-quinone oxidoreductase subunit A (143 aa).

3 consecutive transmembrane segments (helical) span residues phenylalanine 8–threonine 28, phenylalanine 63–tryptophan 83, and phenylalanine 93–tryptophan 113.

This sequence belongs to the complex I subunit 3 family. In terms of assembly, NDH-1 is composed of 14 different subunits. Subunits NuoA, H, J, K, L, M, N constitute the membrane sector of the complex.

Its subcellular location is the cell inner membrane. It carries out the reaction a quinone + NADH + 5 H(+)(in) = a quinol + NAD(+) + 4 H(+)(out). NDH-1 shuttles electrons from NADH, via FMN and iron-sulfur (Fe-S) centers, to quinones in the respiratory chain. The immediate electron acceptor for the enzyme in this species is believed to be a menaquinone. Couples the redox reaction to proton translocation (for every two electrons transferred, four hydrogen ions are translocated across the cytoplasmic membrane), and thus conserves the redox energy in a proton gradient. The polypeptide is NADH-quinone oxidoreductase subunit A (Chlorobium phaeovibrioides (strain DSM 265 / 1930) (Prosthecochloris vibrioformis (strain DSM 265))).